A 133-amino-acid chain; its full sequence is Small ribosomal subunit protein uS9 (133 aa).

The segment at 114 to 133 (VERKKYGKKKARRSPQFSKR) is disordered. Residues 118–133 (KYGKKKARRSPQFSKR) show a composition bias toward basic residues.

Belongs to the universal ribosomal protein uS9 family.

This chain is Small ribosomal subunit protein uS9, found in Fusobacterium nucleatum subsp. nucleatum (strain ATCC 25586 / DSM 15643 / BCRC 10681 / CIP 101130 / JCM 8532 / KCTC 2640 / LMG 13131 / VPI 4355).